We begin with the raw amino-acid sequence, 317 residues long: Uridine phosphorylase 2 (317 aa).

Residues Gly66, Arg100, and 144-147 (RIGT) each bind phosphate. A disulfide bond links Cys95 and Cys102. Uridine contacts are provided by residues 148–149 (SG) and 223–225 (QGR).

This sequence belongs to the PNP/UDP phosphorylase family. In terms of assembly, homodimer. As to expression, predominantly expressed in kidney.

The catalysed reaction is uridine + phosphate = alpha-D-ribose 1-phosphate + uracil. It catalyses the reaction 2'-deoxyuridine + phosphate = 2-deoxy-alpha-D-ribose 1-phosphate + uracil. Its pathway is pyrimidine metabolism; UMP biosynthesis via salvage pathway; uracil from uridine (phosphorylase route): step 1/1. A conditional disulfide bridge can form within the protein that dislocates a critical phosphate-coordinating arginine Arg-100 away from the active site, disabling the enzyme. Catalyzes the reversible phosphorylytic cleavage of uridine to uracil and ribose-1-phosphate which can then be utilized as carbon and energy sources or in the rescue of pyrimidine bases for nucleotide synthesis. Shows broad substrate specificity and can also accept deoxyuridine and other analogous compounds. In Homo sapiens (Human), this protein is Uridine phosphorylase 2.